Consider the following 811-residue polypeptide: Beta-catenin homolog sys-1 (811 aa).

A disordered region spans residues methionine 1–asparagine 105. Positions glutamine 64–alanine 103 are enriched in low complexity.

Interacts with TCF transcription factor pop-1 (via N-terminal region); interaction is direct.

It localises to the nucleus. Its subcellular location is the cytoplasm. It is found in the cytoplasmic granule. The protein resides in the cytoskeleton. The protein localises to the microtubule organizing center. It localises to the centrosome. Its subcellular location is the chromosome. It is found in the centromere. The protein resides in the kinetochore. Its function is as follows. Transcription coregulator. Part of the Wnt signaling asymmetry pathway, probably acting downstream of putative frizzled ligand mom-2, Wnt/frizzled receptors lin-17 and mom-5, and dishevelled homolog dsh-2. Activates or represses target gene expression, depending on upstream Wnt signals and interactions with transcription factors, such as pop-1. Required for the activation of Wnt-responsive genes in the E blastomere; thereby leading to a role in endoderm specification and gut development. Reciprocal distribution patterns of sys-1 and pop-1/TCF in the daughters of anterior-posterior cell divisions functions in specifying cell fate; a higher sys-1 to pop-1 ratio promotes the posterior cell fate, whereas a low sys-1 to pop-1 ratio promotes the anterior fate. Represses expression of homeobox ttx-3 in neuroblasts of the SIAD/SIBV lineage, perhaps acting by blocking its transcriptional activation by a complex consisting of ref-2 and pop-1. Required for early organization of the hermaphrodite, but not the male, gonad; involved in generation of regulatory cells, known as the distal tip cells (DTC), and in formation of the somatic gonadal primordium. Involved in regulating asymmetric divisions of the somatic gonadal precursor cells (SGP), Z1 and Z4. The polypeptide is Beta-catenin homolog sys-1 (Caenorhabditis elegans).